The sequence spans 66 residues: Large ribosomal subunit protein uL29 (66 aa).

The protein belongs to the universal ribosomal protein uL29 family.

The protein is Large ribosomal subunit protein uL29 of Brucella abortus (strain S19).